The following is a 417-amino-acid chain: Serine hydroxymethyltransferase (417 aa).

(6S)-5,6,7,8-tetrahydrofolate contacts are provided by residues Leu-121 and 125–127 (GHL). The residue at position 229 (Lys-229) is an N6-(pyridoxal phosphate)lysine. 355–357 (SPF) provides a ligand contact to (6S)-5,6,7,8-tetrahydrofolate.

Belongs to the SHMT family. As to quaternary structure, homodimer. The cofactor is pyridoxal 5'-phosphate.

It localises to the cytoplasm. The enzyme catalyses (6R)-5,10-methylene-5,6,7,8-tetrahydrofolate + glycine + H2O = (6S)-5,6,7,8-tetrahydrofolate + L-serine. It functions in the pathway one-carbon metabolism; tetrahydrofolate interconversion. The protein operates within amino-acid biosynthesis; glycine biosynthesis; glycine from L-serine: step 1/1. Functionally, catalyzes the reversible interconversion of serine and glycine with tetrahydrofolate (THF) serving as the one-carbon carrier. This reaction serves as the major source of one-carbon groups required for the biosynthesis of purines, thymidylate, methionine, and other important biomolecules. Also exhibits THF-independent aldolase activity toward beta-hydroxyamino acids, producing glycine and aldehydes, via a retro-aldol mechanism. In Citrobacter koseri (strain ATCC BAA-895 / CDC 4225-83 / SGSC4696), this protein is Serine hydroxymethyltransferase.